The sequence spans 55 residues: Preprotein translocase subunit SecG (55 aa).

Residues 1–31 (MPKNNTNENFQSGAGLIRYFNEEEIKGPALD) lie on the Cytoplasmic side of the membrane. A helical transmembrane segment spans residues 32 to 51 (PKLIIYIGIAMAVIVELAKI). Over 52-55 (FWPV) the chain is Extracellular.

This sequence belongs to the SEC61-beta family. Component of the protein translocase complex. Heterotrimer consisting of alpha (SecY), beta (SecG) and gamma (SecE) subunits. Can form oligomers of the heterotrimer.

Its subcellular location is the cell membrane. Functionally, involved in protein export. The function of the beta subunit is unknown, but it may be involved in stabilization of the trimeric complex. The protein is Preprotein translocase subunit SecG of Picrophilus torridus (strain ATCC 700027 / DSM 9790 / JCM 10055 / NBRC 100828 / KAW 2/3).